Reading from the N-terminus, the 344-residue chain is Protein RecA (344 aa).

Residue 66–73 participates in ATP binding; that stretch reads GPESSGKT.

The protein belongs to the RecA family.

Its subcellular location is the cytoplasm. In terms of biological role, can catalyze the hydrolysis of ATP in the presence of single-stranded DNA, the ATP-dependent uptake of single-stranded DNA by duplex DNA, and the ATP-dependent hybridization of homologous single-stranded DNAs. It interacts with LexA causing its activation and leading to its autocatalytic cleavage. This chain is Protein RecA, found in Azoarcus sp. (strain BH72).